Here is a 195-residue protein sequence, read N- to C-terminus: 3-isopropylmalate dehydratase small subunit (195 aa).

It belongs to the LeuD family. LeuD type 1 subfamily. As to quaternary structure, heterodimer of LeuC and LeuD.

It catalyses the reaction (2R,3S)-3-isopropylmalate = (2S)-2-isopropylmalate. It functions in the pathway amino-acid biosynthesis; L-leucine biosynthesis; L-leucine from 3-methyl-2-oxobutanoate: step 2/4. Functionally, catalyzes the isomerization between 2-isopropylmalate and 3-isopropylmalate, via the formation of 2-isopropylmaleate. This Parafrankia sp. (strain EAN1pec) protein is 3-isopropylmalate dehydratase small subunit.